A 178-amino-acid polypeptide reads, in one-letter code: MAELTTLARPYAKAAFEHAQAHQQLANWSAMLGLAAAVSQDDTMQRLLKAPRLTSAEKAATFIDVCGDKFNAQAQNFIRVAAENDRLLLLPEIAALFDLYKAEQEKSVDVEVTSAFALNQEQQDKLAKVLSARLGQEVRLHASEDANLIGGVVIRAGDLVIDGSVRGKIAKLAEALKS.

This sequence belongs to the ATPase delta chain family. As to quaternary structure, F-type ATPases have 2 components, F(1) - the catalytic core - and F(0) - the membrane proton channel. F(1) has five subunits: alpha(3), beta(3), gamma(1), delta(1), epsilon(1). F(0) has three main subunits: a(1), b(2) and c(10-14). The alpha and beta chains form an alternating ring which encloses part of the gamma chain. F(1) is attached to F(0) by a central stalk formed by the gamma and epsilon chains, while a peripheral stalk is formed by the delta and b chains.

The protein localises to the cell inner membrane. In terms of biological role, f(1)F(0) ATP synthase produces ATP from ADP in the presence of a proton or sodium gradient. F-type ATPases consist of two structural domains, F(1) containing the extramembraneous catalytic core and F(0) containing the membrane proton channel, linked together by a central stalk and a peripheral stalk. During catalysis, ATP synthesis in the catalytic domain of F(1) is coupled via a rotary mechanism of the central stalk subunits to proton translocation. Its function is as follows. This protein is part of the stalk that links CF(0) to CF(1). It either transmits conformational changes from CF(0) to CF(1) or is implicated in proton conduction. The chain is ATP synthase subunit delta from Pseudomonas putida (strain W619).